Consider the following 232-residue polypeptide: Transcriptional regulatory protein CpxR (232 aa).

The Response regulatory domain occupies 3–115 (KILLVDDDRE…ELVARIRAIL (113 aa)). Aspartate 51 is subject to 4-aspartylphosphate. A DNA-binding region (ompR/PhoB-type) is located at residues 131–230 (SPTLEVDALV…LRGRGYLMVS (100 aa)).

Post-translationally, phosphorylated by CpxA.

Its subcellular location is the cytoplasm. Its function is as follows. Member of the two-component regulatory system CpxA/CpxR. This system combats a variety of extracytoplasmic protein-mediated toxicities. It performs this function by increasing the synthesis of the periplasmic protease, DegP as well as that of CpxP protein. The protein is Transcriptional regulatory protein CpxR (cpxR) of Escherichia coli O157:H7.